The sequence spans 244 residues: Octanoyltransferase (244 aa).

The tract at residues 1–21 is disordered; it reads MDKKLHSVSPESGPNSNLDLT. Positions 9-21 are enriched in polar residues; it reads SPESGPNSNLDLT. In terms of domain architecture, BPL/LPL catalytic spans 59-244; the sequence is PFSPQAVWLL…LNWEKINQSL (186 aa). Substrate contacts are provided by residues 101-108, 168-170, and 181-183; these read RGGEVTHH, SIG, and GFS. The Acyl-thioester intermediate role is filled by C199.

The protein belongs to the LipB family.

The protein resides in the cytoplasm. It catalyses the reaction octanoyl-[ACP] + L-lysyl-[protein] = N(6)-octanoyl-L-lysyl-[protein] + holo-[ACP] + H(+). It participates in protein modification; protein lipoylation via endogenous pathway; protein N(6)-(lipoyl)lysine from octanoyl-[acyl-carrier-protein]: step 1/2. Functionally, catalyzes the transfer of endogenously produced octanoic acid from octanoyl-acyl-carrier-protein onto the lipoyl domains of lipoate-dependent enzymes. Lipoyl-ACP can also act as a substrate although octanoyl-ACP is likely to be the physiological substrate. The sequence is that of Octanoyltransferase from Prochlorococcus marinus (strain NATL1A).